The chain runs to 277 residues: MKISMQKADFWKKAAISLLVFTMFFTLMMSETVFAAGLNKDQKRRAEQLTSIFENGTTEIQYGYVERLDDGRGYTCGRAGFTTATGDALEVVEVYTKAVPNNKLKKYLPELRRLAKEESDDTSNLKGFASAWKSLANDKEFRAAQDKVNDHLYYQPAMKRSDNAGLKTALARAVMYDTVIQHGDGDDPDSFYALIKRTNKKAGGSPKDGIDEKKWLNKFLDVRYDDLMNPANHDTRDEWRESVARVDVLRSIAKENNYNLNGPIHVRSNEYGNFVIK.

The N-terminal stretch at 1 to 35 (MKISMQKADFWKKAAISLLVFTMFFTLMMSETVFA) is a signal peptide. Residue Glu54 is the Proton donor of the active site. Residue Asp70 is the Nucleophile of the active site.

The protein belongs to the glycosyl hydrolase 46 family.

The protein localises to the secreted. It carries out the reaction Endohydrolysis of beta-(1-&gt;4)-linkages between D-glucosamine residues in a partly acetylated chitosan.. Functionally, aids in the defense against invading fungal pathogens by degrading their cell wall chitosan. The sequence is that of Chitosanase (csn) from Bacillus subtilis (strain 168).